A 78-amino-acid polypeptide reads, in one-letter code: MSEIAQKVKSIIVEKLGVEESEVTTEASFTNDLGADSLDTVELIMEFEKEFNISIPDEQAENITTVGQAIAYLEQHVK.

One can recognise a Carrier domain in the interval 2-77 (SEIAQKVKSI…QAIAYLEQHV (76 aa)). S37 carries the post-translational modification O-(pantetheine 4'-phosphoryl)serine.

This sequence belongs to the acyl carrier protein (ACP) family. In terms of processing, 4'-phosphopantetheine is transferred from CoA to a specific serine of apo-ACP by AcpS. This modification is essential for activity because fatty acids are bound in thioester linkage to the sulfhydryl of the prosthetic group.

The protein resides in the cytoplasm. It functions in the pathway lipid metabolism; fatty acid biosynthesis. In terms of biological role, carrier of the growing fatty acid chain in fatty acid biosynthesis. In Cytophaga hutchinsonii (strain ATCC 33406 / DSM 1761 / CIP 103989 / NBRC 15051 / NCIMB 9469 / D465), this protein is Acyl carrier protein.